A 434-amino-acid polypeptide reads, in one-letter code: Purple acid phosphatase 22 (434 aa).

The N-terminal stretch at 1 to 22 (MKLFGLFLSFTLLFLCPFISQA) is a signal peptide. N-linked (GlcNAc...) asparagine glycosylation occurs at Asn116. Fe cation is bound by residues Asp148, Asp175, and Tyr178. Residue Asp175 coordinates Zn(2+). The Zn(2+) site is built by Asn208 and His292. Asn208 provides a ligand contact to substrate. The Proton donor role is filled by His302. His329 lines the Zn(2+) pocket. Position 329–331 (329–331 (HVH)) interacts with substrate. His331 provides a ligand contact to Fe cation. The N-linked (GlcNAc...) asparagine glycan is linked to Asn403.

This sequence belongs to the metallophosphoesterase superfamily. Purple acid phosphatase family. In terms of assembly, homodimer. Fe cation serves as cofactor. Zn(2+) is required as a cofactor. In terms of tissue distribution, expressed in roots, stems, leaves, flowers and siliques.

It localises to the secreted. The enzyme catalyses a phosphate monoester + H2O = an alcohol + phosphate. This is Purple acid phosphatase 22 (PAP22) from Arabidopsis thaliana (Mouse-ear cress).